A 153-amino-acid polypeptide reads, in one-letter code: Profilin (153 aa).

The protein belongs to the profilin family. Occurs in many kinds of cells as a complex with monomeric actin in a 1:1 ratio.

The protein localises to the cytoplasm. Its subcellular location is the cytoskeleton. Functionally, binds to actin and affects the structure of the cytoskeleton. At high concentrations, profilin prevents the polymerization of actin, whereas it enhances it at low concentrations. By binding to PIP2, it inhibits the formation of IP3 and DG. The polypeptide is Profilin (Tetrahymena pyriformis).